The sequence spans 438 residues: Phosphatidylserine decarboxylase proenzyme 1, mitochondrial (438 aa).

A mitochondrion-targeting transit peptide spans 1–21 (MRRFRVWPPSPSPWPLLASRP). The Mitochondrial matrix portion of the chain corresponds to 22 to 48 (CPHSHHHRSPFHASANSGARQGNFILP). Residues 49 to 67 (GATAATLVMFGILHARRMY) form a helical membrane-spanning segment. Topologically, residues 68–438 (EDQKVVERKE…EAIGRWTSRE (371 aa)) are mitochondrial intermembrane. Residues Asp-173, His-273, and Ser-387 each act as charge relay system; for autoendoproteolytic cleavage activity in the active site. Catalysis depends on Ser-387, which acts as the Schiff-base intermediate with substrate; via pyruvic acid; for decarboxylase activity. Ser-387 is modified (pyruvic acid (Ser); by autocatalysis).

The protein belongs to the phosphatidylserine decarboxylase family. PSD-B subfamily. Eukaryotic type I sub-subfamily. In terms of assembly, heterodimer of a large membrane-associated beta subunit and a small pyruvoyl-containing alpha subunit. The cofactor is pyruvate. Is synthesized initially as an inactive proenzyme. Formation of the active enzyme involves a self-maturation process in which the active site pyruvoyl group is generated from an internal serine residue via an autocatalytic post-translational modification. Two non-identical subunits are generated from the proenzyme in this reaction, and the pyruvate is formed at the N-terminus of the alpha chain, which is derived from the carboxyl end of the proenzyme. The autoendoproteolytic cleavage occurs by a canonical serine protease mechanism, in which the side chain hydroxyl group of the serine supplies its oxygen atom to form the C-terminus of the beta chain, while the remainder of the serine residue undergoes an oxidative deamination to produce ammonia and the pyruvoyl prosthetic group on the alpha chain. During this reaction, the Ser that is part of the protease active site of the proenzyme becomes the pyruvoyl prosthetic group, which constitutes an essential element of the active site of the mature decarboxylase.

It is found in the mitochondrion inner membrane. It catalyses the reaction a 1,2-diacyl-sn-glycero-3-phospho-L-serine + H(+) = a 1,2-diacyl-sn-glycero-3-phosphoethanolamine + CO2. The protein operates within phospholipid metabolism; phosphatidylethanolamine biosynthesis; phosphatidylethanolamine from CDP-diacylglycerol: step 2/2. In terms of biological role, catalyzes the formation of phosphatidylethanolamine (PtdEtn) from phosphatidylserine (PtdSer). Plays a central role in phospholipid metabolism and in the interorganelle trafficking of phosphatidylserine. In Oryza sativa subsp. japonica (Rice), this protein is Phosphatidylserine decarboxylase proenzyme 1, mitochondrial (PSD1).